The sequence spans 255 residues: Pyridoxine 5'-phosphate synthase (255 aa).

2 residues coordinate 3-amino-2-oxopropyl phosphate: N8 and R19. H44 serves as the catalytic Proton acceptor. The 1-deoxy-D-xylulose 5-phosphate site is built by R46 and H51. The active-site Proton acceptor is E74. T111 serves as a coordination point for 1-deoxy-D-xylulose 5-phosphate. Catalysis depends on H202, which acts as the Proton donor. 3-amino-2-oxopropyl phosphate contacts are provided by residues D203 and 225 to 226 (GH).

The protein belongs to the PNP synthase family. As to quaternary structure, homooctamer; tetramer of dimers.

It localises to the cytoplasm. It catalyses the reaction 3-amino-2-oxopropyl phosphate + 1-deoxy-D-xylulose 5-phosphate = pyridoxine 5'-phosphate + phosphate + 2 H2O + H(+). The protein operates within cofactor biosynthesis; pyridoxine 5'-phosphate biosynthesis; pyridoxine 5'-phosphate from D-erythrose 4-phosphate: step 5/5. Functionally, catalyzes the complicated ring closure reaction between the two acyclic compounds 1-deoxy-D-xylulose-5-phosphate (DXP) and 3-amino-2-oxopropyl phosphate (1-amino-acetone-3-phosphate or AAP) to form pyridoxine 5'-phosphate (PNP) and inorganic phosphate. This chain is Pyridoxine 5'-phosphate synthase, found in Xanthomonas oryzae pv. oryzae (strain PXO99A).